Reading from the N-terminus, the 1342-residue chain is DNA-directed RNA polymerase subunit beta (1342 aa).

It belongs to the RNA polymerase beta chain family. In terms of assembly, the RNAP catalytic core consists of 2 alpha, 1 beta, 1 beta' and 1 omega subunit. When a sigma factor is associated with the core the holoenzyme is formed, which can initiate transcription.

The catalysed reaction is RNA(n) + a ribonucleoside 5'-triphosphate = RNA(n+1) + diphosphate. In terms of biological role, DNA-dependent RNA polymerase catalyzes the transcription of DNA into RNA using the four ribonucleoside triphosphates as substrates. In Klebsiella pneumoniae subsp. pneumoniae (strain ATCC 700721 / MGH 78578), this protein is DNA-directed RNA polymerase subunit beta.